Reading from the N-terminus, the 371-residue chain is MASSNLLVLLLFALFAIPRGLANYDKPPVYQPPVYKPPVEKPPVYKPPVEKPPVYKPPVEKPPVYKPPVEKPPVYKPPVEKPPVYKPPVEKPPVYKPPVEKPPVYKPPVEKPPVYKPPVEKPPVYKPPVEKPPVYKPPVEKPPVYKPPVEKPPVYKPPVEKPPVYKPPVEKPPVYKPPVEKPPVYKPPVEKPPVYKPPVEKPPVYKPPVEKPPVYKPPVEKPPVYKPPVEKPPIYKPPVEKPPVYKPPVEKPPVYKPPVEKPPIYKPPVEKPPVYKPPVEKPPVYKPPVEKPPVYKPPVEKPPVYKPPVEKPPVYKPPVYKPPVYKPPVEKPPVYKPPVYKPPVEKPPVYKPPVYKPPVEKPPVYGPPHHP.

An N-terminal signal peptide occupies residues 1 to 22 (MASSNLLVLLLFALFAIPRGLA). Tandem repeats lie at residues 32-36 (PPVYK), 37-41 (PPVEK), 42-46 (PPVYK), 47-51 (PPVEK), 52-56 (PPVYK), 57-61 (PPVEK), 62-66 (PPVYK), 67-71 (PPVEK), 72-76 (PPVYK), 77-81 (PPVEK), 82-86 (PPVYK), 87-91 (PPVEK), 92-96 (PPVYK), 97-101 (PPVEK), 102-106 (PPVYK), 107-111 (PPVEK), 112-116 (PPVYK), 117-121 (PPVEK), 122-126 (PPVYK), 127-131 (PPVEK), 132-136 (PPVYK), 137-141 (PPVEK), 142-146 (PPVYK), 147-151 (PPVEK), 152-156 (PPVYK), 157-161 (PPVEK), 162-166 (PPVYK), 167-171 (PPVEK), 172-176 (PPVYK), 177-181 (PPVEK), 182-186 (PPVYK), 187-191 (PPVEK), 192-196 (PPVYK), 197-201 (PPVEK), 202-206 (PPVYK), 207-211 (PPVEK), 212-216 (PPVYK), 217-221 (PPVEK), 222-226 (PPVYK), 227-231 (PPVEK), 232-236 (PPIYK), 237-241 (PPVEK), 242-246 (PPVYK), 247-251 (PPVEK), 252-256 (PPVYK), 257-261 (PPVEK), 262-266 (PPIYK), 267-271 (PPVEK), 272-276 (PPVYK), 277-281 (PPVEK), 282-286 (PPVYK), 287-291 (PPVEK), 292-296 (PPVYK), 297-301 (PPVEK), 302-306 (PPVYK), 307-311 (PPVEK), 312-316 (PPVYK), 317-321 (PPVYK), 322-326 (PPVYK), 327-331 (PPVEK), 332-336 (PPVYK), 337-341 (PPVYK), 342-346 (PPVEK), 347-351 (PPVYK), 352-356 (PPVYK), and 357-361 (PPVEK). Residues 32-366 (PPVYKPPVEK…PPVEKPPVYG (335 aa)) form a 67 X 5 AA approximate tandem repeats of P-P-[IV]-[EY]-K region. Residues 49–317 (VEKPPVYKPP…PVEKPPVYKP (269 aa)) are disordered. The segment at 339 to 371 (VYKPPVEKPPVYKPPVYKPPVEKPPVYGPPHHP) is disordered. One copy of the 67; approximate repeat lies at 362–366 (PPVYG).

The protein belongs to the plant proline-rich protein superfamily. ENOD12 family. Expressed in hypocotyls, roots and mature root nodules.

It is found in the secreted. It localises to the cell wall. In terms of biological role, this is a developmentally regulated putative cell wall protein. The protein is Repetitive proline-rich cell wall protein 2 (PRP2) of Medicago truncatula (Barrel medic).